A 710-amino-acid chain; its full sequence is Dendrin (710 aa).

4 disordered regions span residues 1 to 22 (MLDG…DEES), 62 to 195 (WARG…PWGG), 213 to 274 (AGTA…KRLD), and 324 to 375 (GLNS…GKEG). Residues 103 to 134 (AEVRAREQEKRKAASQEREAKETERKRRKAGG) are a coiled coil. Basic and acidic residues predominate over residues 105–127 (VRAREQEKRKAASQEREAKETER). Residues 113–131 (RKAASQEREAKETERKRRK) are nuclear localization. Residues 186 to 236 (GVAWAGPWGGRRPGPPSYEAHLLLRGSAGTAPRRRWDRPPPYVAPPSYEGP) are interaction with MAGI2. The segment covering 265–274 (EGGRTKKRLD) has biased composition (basic and acidic residues). Positions 341-435 (PGTDAALSRS…LEVWKVTRRA (95 aa)) are interaction with ACTN1. Basic residues predominate over residues 360-370 (PRSRQHLRGSR). S388 bears the Phosphoserine mark. Disordered regions lie at residues 390 to 422 (KKPP…EGAE), 469 to 508 (PRTQ…ANPS), and 521 to 710 (NQPS…RERE). Residues 407 to 708 (GGTGWKESLG…TRKTPQGNRE (302 aa)) form an interaction with CD2AP and NPHS1 region. The span at 469–491 (PRTQQGQLVPSGESCSVSDSLSQ) shows a compositional bias: polar residues. Basic and acidic residues predominate over residues 693 to 710 (GFIREDTRKTPQGNRERE).

In terms of assembly, forms a ternary complex with MAGI2 and SH3KBP1; recruits DDN to the cytoplasm. Interacts with MAGI1. Interacts with ACTN1 and may interact with WWC1. Interacts with the podocyte slit diaphragm proteins CD2AP, NPHS1 and NPHS2; the interaction with CD2AP and NPHS1 is direct. Two forms of 81 kDa and 89 kDa are expressed in brain. The 81 kDa form is the only one found in kidney podocytes.

The protein localises to the cell projection. It is found in the dendritic spine membrane. It localises to the cytoplasm. Its subcellular location is the endoplasmic reticulum membrane. The protein resides in the perikaryon. The protein localises to the nucleus. Promotes apoptosis of kidney glomerular podocytes. Podocytes are highly specialized cells essential to the ultrafiltration of blood, resulting in the extraction of urine and the retention of protein. The sequence is that of Dendrin (Ddn) from Mus musculus (Mouse).